The sequence spans 259 residues: Pimeloyl-[acyl-carrier protein] methyl ester esterase (259 aa).

Residues 15-242 (HLVLLHGWGL…AAHAPFISHP (228 aa)) enclose the AB hydrolase-1 domain. Substrate contacts are provided by residues tryptophan 22, 82-83 (SL), and 143-147 (FLALQ). Serine 82 acts as the Nucleophile in catalysis. Catalysis depends on residues aspartate 207 and histidine 235. Histidine 235 provides a ligand contact to substrate.

Belongs to the AB hydrolase superfamily. Carboxylesterase BioH family. As to quaternary structure, monomer.

It is found in the cytoplasm. It catalyses the reaction 6-carboxyhexanoyl-[ACP] methyl ester + H2O = 6-carboxyhexanoyl-[ACP] + methanol + H(+). The protein operates within cofactor biosynthesis; biotin biosynthesis. In terms of biological role, the physiological role of BioH is to remove the methyl group introduced by BioC when the pimeloyl moiety is complete. It allows to synthesize pimeloyl-ACP via the fatty acid synthetic pathway through the hydrolysis of the ester bonds of pimeloyl-ACP esters. This is Pimeloyl-[acyl-carrier protein] methyl ester esterase from Cronobacter sakazakii (strain ATCC BAA-894) (Enterobacter sakazakii).